Consider the following 359-residue polypeptide: uncharacterized protein (359 aa).

The 267-residue stretch at 43–309 (YHLIRKLGSG…VLDFLGDDWG (267 aa)) folds into the Protein kinase domain. Residues 49-57 (LGSGSYGRV) and K72 contribute to the ATP site. Catalysis depends on D163, which acts as the Proton acceptor. Residues 314-359 (REGPGVLGSAVSYEDREEGGSSLEEWTDEGDDSKSGGRTGTDGGAP) are disordered. A compositionally biased stretch (gly residues) spans 350-359 (GRTGTDGGAP).

This sequence belongs to the protein kinase superfamily. Ser/Thr protein kinase family. STKL subfamily.

The enzyme catalyses L-seryl-[protein] + ATP = O-phospho-L-seryl-[protein] + ADP + H(+). The catalysed reaction is L-threonyl-[protein] + ATP = O-phospho-L-threonyl-[protein] + ADP + H(+). This is an uncharacterized protein from Homo sapiens (Human).